The following is a 432-amino-acid chain: MGFHIYEIKARQIIDSRGNPTVEADVILEDGTLGRAAVPSGASTGTNEAVELRDGDKSVYMGKGVLKAVENIINIISPELEGMSALNQVEIDRKMLELDGTPNKSKLGANAILAVSMATARAAAEHLGLKVYQYLGTYKANILPTPMCNIINGGAHSDNSVDFQEFMIMPIGAKTFSDAIRMSAEVFHTLKSILSKKGYATSVGDEGGFAPNLKSNEEACEVIMEAIKSAGYTPGTDIAIALDPATSELYDPKTKKYVFKWSTKEELTSQEMVEYWAKWVEKYPIISIEDGMAEEDWDGWKKLTDKIGNKIQLVGDDLFVTNTSFLKKGIEMKVANAILIKVNQIGTLTETFEAVEMAKKAGYTAIVSHRSGETEDTTIADLVVALGTGQIKTGSLSRTDRIAKYNQLLRIEEELGSIAEYHGKDVFYSINK.

Residue Gln-164 participates in (2R)-2-phosphoglycerate binding. The Proton donor role is filled by Glu-206. Mg(2+) contacts are provided by Asp-243, Glu-289, and Asp-316. Residues Lys-341, Arg-370, Ser-371, and Lys-392 each coordinate (2R)-2-phosphoglycerate. Lys-341 serves as the catalytic Proton acceptor.

The protein belongs to the enolase family. Mg(2+) is required as a cofactor.

It localises to the cytoplasm. The protein resides in the secreted. Its subcellular location is the cell surface. It carries out the reaction (2R)-2-phosphoglycerate = phosphoenolpyruvate + H2O. It participates in carbohydrate degradation; glycolysis; pyruvate from D-glyceraldehyde 3-phosphate: step 4/5. Its function is as follows. Catalyzes the reversible conversion of 2-phosphoglycerate (2-PG) into phosphoenolpyruvate (PEP). It is essential for the degradation of carbohydrates via glycolysis. This chain is Enolase, found in Borrelia duttonii (strain Ly).